The sequence spans 399 residues: Pre-mycofactocin synthase (399 aa).

In terms of domain architecture, FMN hydroxy acid dehydrogenase spans 4–386 (ARDIWFETVA…VPEDILVPEG (383 aa)). 2 residues coordinate FMN: Ser111 and Gln131. Position 133 (Tyr133) interacts with a 2-oxocarboxylate. Thr159 contributes to the FMN binding site. An a 2-oxocarboxylate-binding site is contributed by Arg168. Position 257 (Lys257) interacts with FMN. The active-site Proton acceptor is the His281. Residues 312–316 (DGGIR) and 335–336 (GR) contribute to the FMN site.

It belongs to the FMN-dependent alpha-hydroxy acid dehydrogenase family. It depends on FMN as a cofactor.

It catalyses the reaction 3-amino-5-[(4-hydroxyphenyl)methyl]-4,4-dimethyl-2-pyrrolidin-2-one + O2 + H2O = pre-mycofactocin + H2O2 + NH4(+). Functionally, involved in the biosynthesis of the enzyme cofactor mycofactocin (MFT). Catalyzes the oxidative deamination of AHDP (3-amino-5-[(4-hydroxyphenyl)methyl]-4,4-dimethyl-2-pyrrolidin-2-one), forming an alpha-keto amide moiety on the resulting molecule, which is called pre-mycofactocin (PMFT). This reaction occurs via a 5-[(4-hydroxyphenyl)methyl]-3-imino-4,4-dimethylpyrrolidin-2-one intermediate, which converts to PMFT. The alpha-keto amide moiety is the redox-active center for the redox activity of mycofactocin. Is required for the in vivo ethanol assimilation in M.smegmatis. This is Pre-mycofactocin synthase from Mycolicibacterium smegmatis (strain ATCC 700084 / mc(2)155) (Mycobacterium smegmatis).